The chain runs to 70 residues: Large ribosomal subunit protein bL31 (70 aa).

Residues Cys-16, Cys-18, Cys-37, and Cys-40 each contribute to the Zn(2+) site.

The protein belongs to the bacterial ribosomal protein bL31 family. Type A subfamily. In terms of assembly, part of the 50S ribosomal subunit. Zn(2+) serves as cofactor.

Binds the 23S rRNA. This is Large ribosomal subunit protein bL31 from Ectopseudomonas mendocina (strain ymp) (Pseudomonas mendocina).